The primary structure comprises 155 residues: uncharacterized protein (155 aa).

The N-terminal stretch at 1–30 (MTYNTNTSLSSYAGLSAFALSVFCILWGTA) is a signal peptide.

This is an uncharacterized protein from Treponema pallidum (strain Nichols).